A 201-amino-acid chain; its full sequence is dITP/XTP pyrophosphatase (201 aa).

A substrate-binding site is contributed by 9 to 14 (SNNAGK). Positions 41 and 70 each coordinate Mg(2+). Catalysis depends on D70, which acts as the Proton acceptor. Residues S71, 155–158 (FGYD), K178, and 183–184 (HR) each bind substrate.

It belongs to the HAM1 NTPase family. As to quaternary structure, homodimer. The cofactor is Mg(2+).

It catalyses the reaction XTP + H2O = XMP + diphosphate + H(+). It carries out the reaction dITP + H2O = dIMP + diphosphate + H(+). The catalysed reaction is ITP + H2O = IMP + diphosphate + H(+). Functionally, pyrophosphatase that catalyzes the hydrolysis of nucleoside triphosphates to their monophosphate derivatives, with a high preference for the non-canonical purine nucleotides XTP (xanthosine triphosphate), dITP (deoxyinosine triphosphate) and ITP. Seems to function as a house-cleaning enzyme that removes non-canonical purine nucleotides from the nucleotide pool, thus preventing their incorporation into DNA/RNA and avoiding chromosomal lesions. This chain is dITP/XTP pyrophosphatase, found in Methylococcus capsulatus (strain ATCC 33009 / NCIMB 11132 / Bath).